The sequence spans 269 residues: UPF0162 protein YchA (269 aa).

This sequence belongs to the UPF0162 family.

The polypeptide is UPF0162 protein YchA (ychA) (Escherichia coli O157:H7).